A 574-amino-acid chain; its full sequence is PI-PLC X domain-containing protein DDB_G0269228 (574 aa).

The interval 1–42 is disordered; that stretch reads MFSSIMFKKKPKQNLNENEITSQSTTTTSTLSDSKPSEKKIK. Low complexity predominate over residues 21–34; sequence TSQSTTTTSTLSDS. The PI-PLC X-box domain occupies 270 to 449; it reads GIKSSSLRVP…LKKRIINDDG (180 aa).

In Dictyostelium discoideum (Social amoeba), this protein is PI-PLC X domain-containing protein DDB_G0269228.